Reading from the N-terminus, the 520-residue chain is Cytochrome P450 monooxygenase oblB (520 aa).

The next 3 helical transmembrane spans lie at 17–37 (VAVI…RLFL), 229–249 (LFMG…SILA), and 320–340 (IGTG…HIVV). Cys-462 is a binding site for heme.

This sequence belongs to the cytochrome P450 family. Heme serves as cofactor.

It is found in the membrane. It functions in the pathway secondary metabolite biosynthesis; terpenoid biosynthesis. Cytochrome P450 monooxygenase; part of the gene cluster that mediates the biosynthesis of the sesterterpenes ophiobolins, fungal phytotoxins with potential anti-cancer activities. The first step of the pathway is performed by the sesterterpene synthase oblA that possesses both prenyl transferase and terpene cyclase activity, converting isopentenyl diphosphate and dimethylallyl diphosphate into geranylfarnesyl diphosphate (GFPP) and further converting GFPP into ophiobolin F, respectively. Other sesterterpenoids (C(25) terpenoids) are found as minor products of oblA. It is expected that ophiobolin F is then oxidized to ophiobolin A via ophiobolin C and ophiobolin B intermediates by the combined action of the cytochrome P450 monooxygenase oblB and the FAD-dependent oxidoreductase oblC. Although oblB catalyzes multistep oxygenations at C5 and C21/C7 in a relatively efficient manner, it is unable to convert ophiobolin F to ophiobolin C and produces instead several unexpected derivatives. In Aspergillus clavatus (strain ATCC 1007 / CBS 513.65 / DSM 816 / NCTC 3887 / NRRL 1 / QM 1276 / 107), this protein is Cytochrome P450 monooxygenase oblB.